The sequence spans 484 residues: Ribosome biogenesis protein YTM1 (484 aa).

A ubiquitin-like (UBL) domain region spans residues 13 to 95 (VKVTFTTTEA…ESNLTLQYVR (83 aa)). WD repeat units follow at residues 122-161 (SPSG…IATS), 168-206 (GHTA…HFSG), 216-255 (GHTG…APEA), 288-328 (IHSA…VVTT), 330-373 (STSH…ATTS), 379-419 (GHAN…PATQ), and 448-484 (GEGC…VVAE).

Belongs to the WD repeat WDR12/YTM1 family. In terms of assembly, component of the NOP7 complex, composed of ERB1, NOP7 and YTM1. The complex is held together by ERB1, which interacts with NOP7 via its N-terminal domain and with YTM1 via a high-affinity interaction between the seven-bladed beta-propeller domains of the 2 proteins. The NOP7 complex associates with the 66S pre-ribosome. Interacts (via UBL domain) with MDN1 (via VWFA/MIDAS domain).

The protein localises to the nucleus. It localises to the nucleolus. Its subcellular location is the nucleoplasm. Component of the NOP7 complex, which is required for maturation of the 25S and 5.8S ribosomal RNAs and formation of the 60S ribosome. In Chaetomium globosum (strain ATCC 6205 / CBS 148.51 / DSM 1962 / NBRC 6347 / NRRL 1970) (Soil fungus), this protein is Ribosome biogenesis protein YTM1.